We begin with the raw amino-acid sequence, 170 residues long: Peptide deformylase 1 (170 aa).

2 residues coordinate Fe cation: Cys92 and His135. Glu136 is an active-site residue. His139 contacts Fe cation.

Belongs to the polypeptide deformylase family. Fe(2+) serves as cofactor.

The catalysed reaction is N-terminal N-formyl-L-methionyl-[peptide] + H2O = N-terminal L-methionyl-[peptide] + formate. Removes the formyl group from the N-terminal Met of newly synthesized proteins. Requires at least a dipeptide for an efficient rate of reaction. N-terminal L-methionine is a prerequisite for activity but the enzyme has broad specificity at other positions. The sequence is that of Peptide deformylase 1 from Coxiella burnetii (strain RSA 493 / Nine Mile phase I).